A 166-amino-acid polypeptide reads, in one-letter code: Urease accessory protein UreE 2 (166 aa).

The tract at residues 135–154 (EHGAYGGGHHHSRAGEEDFN) is disordered.

The protein belongs to the UreE family.

The protein localises to the cytoplasm. In terms of biological role, involved in urease metallocenter assembly. Binds nickel. Probably functions as a nickel donor during metallocenter assembly. The polypeptide is Urease accessory protein UreE 2 (Pseudomonas syringae pv. syringae (strain B728a)).